A 772-amino-acid chain; its full sequence is Phosphoribosylformylglycinamidine synthase subunit PurL (772 aa).

The active site involves His62. 2 residues coordinate ATP: Tyr65 and Lys109. Residue Glu111 participates in Mg(2+) binding. Residues 112 to 115 and Arg134 each bind substrate; that span reads SHNH. Residue His113 is the Proton acceptor of the active site. Asp135 serves as a coordination point for Mg(2+). Gln259 serves as a coordination point for substrate. Asp287 lines the Mg(2+) pocket. 331–333 contacts substrate; sequence ESQ. 2 residues coordinate ATP: Asp519 and Gly556. Asn557 contacts Mg(2+). Ser559 provides a ligand contact to substrate.

It belongs to the FGAMS family. In terms of assembly, monomer. Part of the FGAM synthase complex composed of 1 PurL, 1 PurQ and 2 PurS subunits.

Its subcellular location is the cytoplasm. The catalysed reaction is N(2)-formyl-N(1)-(5-phospho-beta-D-ribosyl)glycinamide + L-glutamine + ATP + H2O = 2-formamido-N(1)-(5-O-phospho-beta-D-ribosyl)acetamidine + L-glutamate + ADP + phosphate + H(+). It participates in purine metabolism; IMP biosynthesis via de novo pathway; 5-amino-1-(5-phospho-D-ribosyl)imidazole from N(2)-formyl-N(1)-(5-phospho-D-ribosyl)glycinamide: step 1/2. In terms of biological role, part of the phosphoribosylformylglycinamidine synthase complex involved in the purines biosynthetic pathway. Catalyzes the ATP-dependent conversion of formylglycinamide ribonucleotide (FGAR) and glutamine to yield formylglycinamidine ribonucleotide (FGAM) and glutamate. The FGAM synthase complex is composed of three subunits. PurQ produces an ammonia molecule by converting glutamine to glutamate. PurL transfers the ammonia molecule to FGAR to form FGAM in an ATP-dependent manner. PurS interacts with PurQ and PurL and is thought to assist in the transfer of the ammonia molecule from PurQ to PurL. This is Phosphoribosylformylglycinamidine synthase subunit PurL from Leifsonia xyli subsp. xyli (strain CTCB07).